We begin with the raw amino-acid sequence, 40 residues long: Large ribosomal subunit protein bL36B (40 aa).

This sequence belongs to the bacterial ribosomal protein bL36 family.

The chain is Large ribosomal subunit protein bL36B from Arthrobacter sp. (strain FB24).